Reading from the N-terminus, the 609-residue chain is Zinc metalloproteinase-disintegrin-like VAP2B (609 aa).

The first 20 residues, 1–20 (MIQVLLVTICLAAFPYQGSS), serve as a signal peptide directing secretion. Positions 21-189 (IILESGNVND…KKASQLVVTA (169 aa)) are excised as a propeptide. Pyrrolidone carboxylic acid (Glu) is present on Glu-190. The Peptidase M12B domain occupies 198–393 (RFVELFLVVD…HNPECILNEP (196 aa)). Glu-201 and Asp-285 together coordinate Ca(2+). 3 cysteine pairs are disulfide-bonded: Cys-308-Cys-388, Cys-348-Cys-372, and Cys-350-Cys-355. A Zn(2+)-binding site is contributed by His-333. Glu-334 is a catalytic residue. Zn(2+) contacts are provided by His-337 and His-343. An N-linked (GlcNAc...) asparagine glycan is attached at Asn-371. 8 residues coordinate Ca(2+): Cys-388, Asn-391, Val-403, Asn-406, Leu-408, Glu-410, Glu-413, and Asp-416. The 87-residue stretch at 401-487 (PPVCGNELLE…ECPADVFHKN (87 aa)) folds into the Disintegrin domain. 22 disulfide bridges follow: Cys-404–Cys-423, Cys-404–Cys-433, Cys-415–Cys-428, Cys-415–Cys-433, Cys-417–Cys-423, Cys-427–Cys-450, Cys-441–Cys-447, Cys-446–Cys-472, Cys-459–Cys-479, Cys-466–Cys-491, Cys-466–Cys-498, Cys-491–Cys-503, Cys-498–Cys-503, Cys-510–Cys-525, Cys-510–Cys-560, Cys-525–Cys-571, Cys-538–Cys-548, Cys-548–Cys-555, Cys-555–Cys-597, Cys-560–Cys-571, Cys-591–Cys-602, and Cys-597–Cys-602. The interval 459–472 (CRASMSECDPAEHC) is inhibits platelet aggregation. Residues 465 to 467 (ECD) carry the D/ECD-tripeptide motif. Asp-467, Pro-468, Glu-470, Asp-482, and Val-483 together coordinate Ca(2+).

The protein belongs to the venom metalloproteinase (M12B) family. P-III subfamily. P-IIIb sub-subfamily. Monomer or heterodimer; non-covalently linked. Interacts with fibrillar collagen. Zn(2+) is required as a cofactor. In terms of processing, the N-terminus is blocked. Expressed by the venom gland.

It is found in the secreted. Its function is as follows. Zinc metalloprotease that abolishes platelet aggregation induced by collagen, but has no effect on platelet aggregation induced by ADP or thromboxane analog. This inhibition may be due to its ability to bind collagen and block the binding site on collagen for platelets and/or to its ability to bind to the platelet alpha-2/beta-1 collagen receptor (ITGA2/ITGB1) to block its interaction with collagen and hence prevent platelet stimulation. Functionally, abolishes platelet aggregation induced by collagen (IC(50)=66 nM) but not ADP-stimulated platelet aggregation. This inhibition may be due to its ability to bind collagen and block the binding site on collagen for platelets and/or to its ability to bind to the platelet alpha-2/beta-1 collagen receptor (ITGA2/ITGB1) to block its interaction with collagen and hence prevent platelet stimulation. This Crotalus atrox (Western diamondback rattlesnake) protein is Zinc metalloproteinase-disintegrin-like VAP2B.